The sequence spans 228 residues: Lipoprotein-releasing system ATP-binding protein LolD (228 aa).

The ABC transporter domain maps to 6–228 (LRLSGIEKTY…LSDGRLSAES (223 aa)). 43 to 50 (APSGAGKS) contacts ATP.

This sequence belongs to the ABC transporter superfamily. Lipoprotein translocase (TC 3.A.1.125) family. The complex is composed of two ATP-binding proteins (LolD) and two transmembrane proteins (LolC and LolE).

The protein localises to the cell inner membrane. Its function is as follows. Part of the ABC transporter complex LolCDE involved in the translocation of mature outer membrane-directed lipoproteins, from the inner membrane to the periplasmic chaperone, LolA. Responsible for the formation of the LolA-lipoprotein complex in an ATP-dependent manner. The chain is Lipoprotein-releasing system ATP-binding protein LolD from Ruegeria pomeroyi (strain ATCC 700808 / DSM 15171 / DSS-3) (Silicibacter pomeroyi).